The primary structure comprises 74 residues: Lantibiotic lichenicidin A1 (74 aa).

A propeptide spanning residues 1 to 42 is cleaved from the precursor; sequence MSKKEMILSWKNPMYRTESSYHPAGNILKELQEEEQHSIAGG. Thr-43 is subject to 2-oxobutanoic acid. A cross-link (beta-methyllanthionine (Thr-Cys)) is located at residues 45 to 49; that stretch reads TLSTC. At Ser-47 the chain carries 2,3-didehydroalanine (Ser). Thr-48 is modified ((Z)-2,3-didehydrobutyrine). Positions 53–63 form a cross-link, lanthionine (Ser-Cys); sequence SKPLGNNGYLC. Cross-links (beta-methyllanthionine (Thr-Cys)) lie at residues 64–69 and 66–73; these read TVTKEC and TKECMPSC.

In terms of processing, maturation of lantibiotics involves the enzymatic conversion of Thr, and Ser into dehydrated AA and the formation of thioether bonds with cysteine. This is followed by membrane translocation and cleavage of the modified precursor.

It localises to the secreted. Its subcellular location is the cell wall. Functionally, lanthionine-containing peptide antibiotic (lantibiotic) active on Gram-positive bacteria. The bactericidal activity of lantibiotics is based on depolarization of energized bacterial cytoplasmic membranes, initiated by the formation of aqueous transmembrane pores. When present individually, LchA1 exhibits activity towards L.lactis HP. When combined with LchA2, it displays activity towards a broad spectrum of non-pathogenic and pathogenic Gram-positive bacteria including strains of L.monocytogenes, methicillin-resistant S.aureus, S.pneumoniae and strains of vancomycin-resistant enterococci, but not towards E.faecium L4001 and BM4147-1. Combined LchA1 and LchA2 peptides also inhibit Bacillus sp. HIL-Y85/54728, L.lactis DPC3417 and B.halodurans C-125, which produce lantibiotics themselves. Inactivated by proteinase K and pronase E, but not by trypsin and chymotrypsin. The sequence is that of Lantibiotic lichenicidin A1 from Bacillus licheniformis (strain ATCC 14580 / DSM 13 / JCM 2505 / CCUG 7422 / NBRC 12200 / NCIMB 9375 / NCTC 10341 / NRRL NRS-1264 / Gibson 46).